Here is a 518-residue protein sequence, read N- to C-terminus: MQNLPKWKIFLSIICTVFAVICALPNFMQVNSKFLPHDSVNLGLDLRGGAHLLLDVDFDTYLNDSMENLADTLRKNFREDKIGYKNLLVRQNSIQLEVRSPEELKPLKKIINKIDPEIIAEVNENKIKLSYSESRLNDLLNKVVDQSIEIVRMRVDSTGTKEPTLQKQGDKHILLQVPGEENPSYLKNILGKTAKLTFHLVDENANIEEAVKGHVPVGSMLVKGDSESHREYYVVIKKKVVLGGDQLTTASASFDQNSQAVVAFSFNNLGSKIFGEITKNNTGKRLAIVLDNKLLSAPTINGAIMGGSGIITGNFTVESANELALLLRAGSLPAPLKIIEERSIGPSLGADSIESGKKAGLIGFIAVCIFMVWSYGVLGLFANIALSLALLYILALLSLFQATLTLPGIAGIILTMGMAVDANVLIYERIKEELHKGVSNLYAIRTGFESAFATILDSNLTTLIVAFLLYIFGVGAIKGFAVALTIGIISSMFSAIIITKLLIDIWVKYFIPKKLGLV.

6 helical membrane passes run Ile-9–Gln-29, Leu-361–Phe-381, Ile-384–Leu-404, Leu-406–Ile-426, Phe-452–Val-474, and Ile-486–Trp-506.

The protein belongs to the SecD/SecF family. SecD subfamily. As to quaternary structure, forms a complex with SecF. Part of the essential Sec protein translocation apparatus which comprises SecA, SecYEG and auxiliary proteins SecDF-YajC and YidC.

The protein localises to the cell inner membrane. Its function is as follows. Part of the Sec protein translocase complex. Interacts with the SecYEG preprotein conducting channel. SecDF uses the proton motive force (PMF) to complete protein translocation after the ATP-dependent function of SecA. In Rickettsia felis (strain ATCC VR-1525 / URRWXCal2) (Rickettsia azadi), this protein is Protein translocase subunit SecD.